Here is a 583-residue protein sequence, read N- to C-terminus: uncharacterized protein (583 aa).

Residue 24 to 140 (ILADIDDEQL…SAMLRAMARM (117 aa)) coordinates a nucleoside 3',5'-cyclic phosphate. Positions 309–469 (LVMAGGGARG…LNNLPANVMC (161 aa)) constitute a PNPLA domain. The GXGXXG motif lies at 313–318 (GGGARG). The GXSXG motif lies at 340–344 (GTSSG). Residue Ser342 is the Nucleophile of the active site. Asp456 (proton acceptor) is an active-site residue. The DGA/G motif lies at 456–458 (DGG).

It belongs to the NTE family.

This is an uncharacterized protein from Mycobacterium bovis (strain ATCC BAA-935 / AF2122/97).